Consider the following 147-residue polypeptide: 3-dehydroquinate dehydratase (147 aa).

Tyrosine 23 acts as the Proton acceptor in catalysis. Substrate contacts are provided by asparagine 74, histidine 80, and aspartate 87. The Proton donor role is filled by histidine 100. Residues 101 to 102 (LS) and arginine 111 each bind substrate.

The protein belongs to the type-II 3-dehydroquinase family. As to quaternary structure, homododecamer.

The catalysed reaction is 3-dehydroquinate = 3-dehydroshikimate + H2O. It participates in metabolic intermediate biosynthesis; chorismate biosynthesis; chorismate from D-erythrose 4-phosphate and phosphoenolpyruvate: step 3/7. In terms of biological role, catalyzes a trans-dehydration via an enolate intermediate. The polypeptide is 3-dehydroquinate dehydratase (Clostridium botulinum (strain Loch Maree / Type A3)).